A 287-amino-acid polypeptide reads, in one-letter code: Nucleotide-binding protein HEAR2885 (287 aa).

An ATP-binding site is contributed by Gly8–Ser15. Asp57–Ser60 contributes to the GTP binding site.

This sequence belongs to the RapZ-like family.

Displays ATPase and GTPase activities. This chain is Nucleotide-binding protein HEAR2885, found in Herminiimonas arsenicoxydans.